We begin with the raw amino-acid sequence, 309 residues long: Ribonuclease Z (309 aa).

His64, His66, Asp68, His69, His141, Asp209, and His267 together coordinate Zn(2+). Asp68 (proton acceptor) is an active-site residue.

This sequence belongs to the RNase Z family. In terms of assembly, homodimer. Requires Zn(2+) as cofactor.

The catalysed reaction is Endonucleolytic cleavage of RNA, removing extra 3' nucleotides from tRNA precursor, generating 3' termini of tRNAs. A 3'-hydroxy group is left at the tRNA terminus and a 5'-phosphoryl group is left at the trailer molecule.. Its function is as follows. Zinc phosphodiesterase, which displays some tRNA 3'-processing endonuclease activity. Probably involved in tRNA maturation, by removing a 3'-trailer from precursor tRNA. The protein is Ribonuclease Z of Picrophilus torridus (strain ATCC 700027 / DSM 9790 / JCM 10055 / NBRC 100828 / KAW 2/3).